Consider the following 221-residue polypeptide: UPF0319 protein NTHI1987 (221 aa).

The first 21 residues, 1–21, serve as a signal peptide directing secretion; it reads MKLRAVVLGLATLCTSTATFA.

Belongs to the UPF0319 family.

This Haemophilus influenzae (strain 86-028NP) protein is UPF0319 protein NTHI1987.